A 216-amino-acid chain; its full sequence is Noggin-1 (216 aa).

An N-terminal signal peptide occupies residues 1-18 (MDFPRFLLSAYLLLLSFA). Residue Asn55 is glycosylated (N-linked (GlcNAc...) asparagine).

The protein belongs to the noggin family. In terms of assembly, homodimer; disulfide-linked.

The protein resides in the secreted. In terms of biological role, inhibitor of bone morphogenetic proteins (BMP) signaling. May play an important role in the dorsoventral patterning of the embryo. The sequence is that of Noggin-1 (nog1) from Danio rerio (Zebrafish).